We begin with the raw amino-acid sequence, 185 residues long: Transcription antitermination protein NusB (185 aa).

This sequence belongs to the NusB family.

In terms of biological role, involved in transcription antitermination. Required for transcription of ribosomal RNA (rRNA) genes. Binds specifically to the boxA antiterminator sequence of the ribosomal RNA (rrn) operons. This chain is Transcription antitermination protein NusB, found in Rhodospirillum rubrum (strain ATCC 11170 / ATH 1.1.1 / DSM 467 / LMG 4362 / NCIMB 8255 / S1).